Here is a 405-residue protein sequence, read N- to C-terminus: Replication factor C large subunit (405 aa).

47–54 contacts ATP; sequence GPPGVGKT.

It belongs to the activator 1 small subunits family. RfcL subfamily. In terms of assembly, heteromultimer composed of small subunits (RfcS) and large subunits (RfcL).

In terms of biological role, part of the RFC clamp loader complex which loads the PCNA sliding clamp onto DNA. The polypeptide is Replication factor C large subunit (Saccharolobus islandicus (strain M.16.4 / Kamchatka #3) (Sulfolobus islandicus)).